A 404-amino-acid chain; its full sequence is 2,3-diketo-5-methylthiopentyl-1-phosphate enolase (404 aa).

Lys91 acts as the Proton acceptor in catalysis. Residues Lys140, Lys166–Glu169, His257, Gly329, and Gly351–Gly352 contribute to the substrate site. Residues Lys166, Asp168, and Glu169 each coordinate Mg(2+). Lys166 carries the post-translational modification N6-carboxylysine.

It belongs to the RuBisCO large chain family. Type IV subfamily. Homodimer. Mg(2+) serves as cofactor.

The enzyme catalyses 5-methylsulfanyl-2,3-dioxopentyl phosphate = 2-hydroxy-5-methylsulfanyl-3-oxopent-1-enyl phosphate. It participates in amino-acid biosynthesis; L-methionine biosynthesis via salvage pathway; L-methionine from S-methyl-5-thio-alpha-D-ribose 1-phosphate: step 3/6. Functionally, catalyzes the enolization of 2,3-diketo-5-methylthiopentyl-1-phosphate (DK-MTP-1-P) into 2-hydroxy-3-keto-5-methylthiopentenyl-1-phosphate (HK-MTPenyl-1-P). The polypeptide is 2,3-diketo-5-methylthiopentyl-1-phosphate enolase (Bacillus velezensis (strain DSM 23117 / BGSC 10A6 / LMG 26770 / FZB42) (Bacillus amyloliquefaciens subsp. plantarum)).